The sequence spans 282 residues: MKLLRYGPSGQEKPGILDANGRIRDLSAHVPDLAGDALSDAGLTRLRAIDPATLPLVSGEPRIGACVGRVGKFIGIGLNYADHAAEAGMPVPKEPVVFGKWTSSICGPNDGIDIPKGSVKTDWEVELGVVIGTTCKDVDEARALDYVAGYCVVNDVSEREWQIERGGQWDKGKGFDTFGPIGPWLVTRDEVPDPQRLDLWLEVDGHRYQNGNTRTMVFTVAQLVAYLSTCMTLQPGDVITTGTPPGVGMGIKPSPVFLKAGQTVRLGIDGLGEQLQSTRNAR.

Residues glutamate 124, glutamate 126, and aspartate 155 each coordinate Mg(2+).

The protein belongs to the FAH family. Mg(2+) is required as a cofactor.

The chain is Putative hydrolase Bamb_4846 from Burkholderia ambifaria (strain ATCC BAA-244 / DSM 16087 / CCUG 44356 / LMG 19182 / AMMD) (Burkholderia cepacia (strain AMMD)).